The following is a 296-amino-acid chain: Ribonuclease HIII (296 aa).

The RNase H type-2 domain maps to 81–296; sequence QAMIGTDEVG…TQKAKQLLER (216 aa). 3 residues coordinate a divalent metal cation: D87, E88, and D190.

It belongs to the RNase HII family. RnhC subfamily. Mn(2+) serves as cofactor. It depends on Mg(2+) as a cofactor.

It is found in the cytoplasm. The catalysed reaction is Endonucleolytic cleavage to 5'-phosphomonoester.. Endonuclease that specifically degrades the RNA of RNA-DNA hybrids. This Streptococcus gordonii (strain Challis / ATCC 35105 / BCRC 15272 / CH1 / DL1 / V288) protein is Ribonuclease HIII.